Consider the following 268-residue polypeptide: Mitochondrial distribution and morphology protein 12 (268 aa).

The 256-residue stretch at 1 to 256 folds into the SMP-LTD domain; the sequence is MSFEINWQDL…WPSWINLDFN (256 aa). A disordered region spans residues 75–94; that stretch reads LPKDKIPEESDSGCQSADGE.

This sequence belongs to the MDM12 family. As to quaternary structure, component of the ER-mitochondria encounter structure (ERMES) or MDM complex, composed of MMM1, MDM10, MDM12 and MDM34. An MMM1 homodimer associates with one molecule of MDM12 on each side in a pairwise head-to-tail manner, and the SMP-LTD domains of MMM1 and MDM12 generate a continuous hydrophobic tunnel for phospholipid trafficking.

It localises to the mitochondrion outer membrane. The protein localises to the endoplasmic reticulum membrane. Its function is as follows. Component of the ERMES/MDM complex, which serves as a molecular tether to connect the endoplasmic reticulum (ER) and mitochondria. Components of this complex are involved in the control of mitochondrial shape and protein biogenesis, and function in nonvesicular lipid trafficking between the ER and mitochondria. MDM12 is required for the interaction of the ER-resident membrane protein MMM1 and the outer mitochondrial membrane-resident beta-barrel protein MDM10. The MDM12-MMM1 subcomplex functions in the major beta-barrel assembly pathway that is responsible for biogenesis of all mitochondrial outer membrane beta-barrel proteins, and acts in a late step after the SAM complex. The MDM10-MDM12-MMM1 subcomplex further acts in the TOM40-specific pathway after the action of the MDM12-MMM1 complex. Essential for establishing and maintaining the structure of mitochondria and maintenance of mtDNA nucleoids. This is Mitochondrial distribution and morphology protein 12 from Lachancea thermotolerans (strain ATCC 56472 / CBS 6340 / NRRL Y-8284) (Yeast).